The primary structure comprises 143 residues: Small ribosomal subunit protein uS12 (143 aa).

Residues 1–20 are compositionally biased toward basic residues; sequence MGKPRGLRTARKHRSHRRDQ. A disordered region spans residues 1-26; the sequence is MGKPRGLRTARKHRSHRRDQRWHDKD. Hydroxyproline is present on proline 62.

This sequence belongs to the universal ribosomal protein uS12 family. In terms of assembly, component of the 40S small ribosomal subunit.

The protein localises to the cytoplasm. It localises to the cytosol. Its subcellular location is the rough endoplasmic reticulum. The protein is Small ribosomal subunit protein uS12 (RpS23) of Dermacentor variabilis (American dog tick).